The primary structure comprises 137 residues: Large-conductance mechanosensitive channel (137 aa).

A run of 2 helical transmembrane segments spans residues 9–29 (AFAVKGNVVDMAVGIIIGAAF) and 79–99 (IQTILDFIIVAFAIFMGVKVI).

Belongs to the MscL family. In terms of assembly, homopentamer.

The protein resides in the cell inner membrane. In terms of biological role, channel that opens in response to stretch forces in the membrane lipid bilayer. May participate in the regulation of osmotic pressure changes within the cell. This Pseudomonas entomophila (strain L48) protein is Large-conductance mechanosensitive channel.